The sequence spans 486 residues: MSWADLNLMPALPEIVLLIAVSAILIIDLFVKGERRGVTYLLSMLALVATGAATLAAWLPYPVLTFSGMYVADPIASVAKLGLVVATGVAMIYARQYAFDRGFLKGELFTLMLFALLGMCVMVSASHMLTLYIGLELLSLALYALIALSRESVPATEAAMKYFVLGALASGLLLYGVSMVYGGTQSLHIVAVAQSIASGNANVTLVSLGLVFIVAGLAFKLGAVPFHMWVPDVYQGAPTAVTLFVGSAPKLAAFVFVIRFLAQALEPAAVAWQPMLILLAIASLVVGNLAAIMQTNIKRMLAYSTISHMGFMLIGILAATPAGYSAAMFYAITYMLMALAGFGVLLALSRAGFDCETLDDLKGLNRKNAWYALLVLLVMFSMAGIPPLVGFYAKFAVLEAAVNVGLTWLAVVGVVMSLIGAFYYLRVVKAVYFDEATGSAGDALTVGGDMKLVLGVNGLVLLGLGILPNGLYTLCLEAVRQSLGTL.

The next 14 helical transmembrane spans lie at Ala-11–Val-31, Met-44–Leu-64, Pro-74–Ala-94, Phe-103–Val-123, Met-128–Leu-148, Phe-163–Gly-183, Val-206–Phe-226, Pro-238–Ile-258, Pro-267–Gly-287, Met-300–Thr-320, Met-328–Leu-348, Tyr-371–Phe-391, Val-404–Tyr-424, and Leu-452–Tyr-472.

It belongs to the complex I subunit 2 family. NDH-1 is composed of 14 different subunits. Subunits NuoA, H, J, K, L, M, N constitute the membrane sector of the complex.

It localises to the cell inner membrane. It catalyses the reaction a quinone + NADH + 5 H(+)(in) = a quinol + NAD(+) + 4 H(+)(out). Functionally, NDH-1 shuttles electrons from NADH, via FMN and iron-sulfur (Fe-S) centers, to quinones in the respiratory chain. The immediate electron acceptor for the enzyme in this species is believed to be ubiquinone. Couples the redox reaction to proton translocation (for every two electrons transferred, four hydrogen ions are translocated across the cytoplasmic membrane), and thus conserves the redox energy in a proton gradient. The polypeptide is NADH-quinone oxidoreductase subunit N (Laribacter hongkongensis (strain HLHK9)).